A 1446-amino-acid polypeptide reads, in one-letter code: ABC transporter G family member 53 (1446 aa).

An ABC transporter 1 domain is found at 153 to 426; the sequence is ANTLHITPNR…FESVGFKCPE (274 aa). Residue 186–193 coordinates ATP; the sequence is GPPGAGKT. The ABC transmembrane type-2 1 domain occupies 504–717; sequence ELLKANIDRE…AQNAISVNEF (214 aa). 6 helical membrane-spanning segments follow: residues 523–543, 555–575, 610–630, 641–661, 666–686, and 752–772; these read VYIF…TVFI, GGIY…NGLA, TPLS…VIGF, FLLL…IAGF, VVAS…GGFI, and IGVG…TICL. In terms of domain architecture, ABC transporter 2 spans 849 to 1101; that stretch reads ITFEDIRYSV…ELIRYFESIE (253 aa). ATP is bound at residue 894-901; sequence GVSGAGKT. One can recognise an ABC transmembrane type-2 2 domain in the interval 1174 to 1388; sequence TQCLACLWKQ…TLYGLVTSQF (215 aa). A run of 7 helical transmembrane segments spans residues 1195-1215, 1225-1242, 1281-1301, 1308-1328, 1338-1358, 1363-1383, and 1415-1435; these read AVKY…FWGV, LFNA…MGVQ, LPYI…MIGF, FFWY…YGMM, VASV…GFII, IPIW…LYGL, and FLWV…FLFG.

Belongs to the ABC transporter superfamily. ABCG family. PDR (TC 3.A.1.205) subfamily.

The protein localises to the membrane. May be a general defense protein. This is ABC transporter G family member 53 from Oryza sativa subsp. japonica (Rice).